Here is a 953-residue protein sequence, read N- to C-terminus: Coatomer subunit beta (953 aa).

T2 is subject to N-acetylthreonine. HEAT repeat units follow at residues 96–131 (HEMILVCDAYRKDLQHPNEFIRGSTLRFLCKLKEAE), 132–168 (LLEPLMPAIRACLEHRHSYVRRNAVLAIYTIYRNFEH), 240–276 (SERARFIRCIYNLLQSSSPAVKYEAAGTLVTLSSAPT), 277–314 (AIKAAAQCYIDLIIKESDNNVKLIVLDRLIELKEHPAH), 316–353 (RVLQDLVMDILRVLSTPDLEVRKKTLQLALDLVSSRNV), and 396–433 (DMAANVIPVLMEFLSDNNEAAAADVLEFVREAIQRFDN). K494 bears the N6-acetyllysine mark.

Oligomeric complex that consists of at least the alpha, beta, beta', gamma, delta, epsilon and zeta subunits. Interacts (via C-terminus) with HIV-1 Nef; the interaction is direct. Interacts with CAPN8 and PRKCE. Interacts with SCYL1. Interacts with COPG1. Interacts with ARF1 (myristoylated); this interaction is required for binding of COPB1 to Golgi membranes. Interacts (via trunk domain) with ARF1 (via switch I region); the interaction is direct. Interacts with KCNK2 (via N-terminus); this interaction increases the channel-mediated whole cell currents and promotes plasma membrane expression of KCNK2. Interacts with anthrax lethal factor (LF); this interaction may facilitate endosomal vesicle membrane translocation of LF and its release from the lumen of endosomal vesicles to external milieu. Interacts with STX17. Interacts with TMEM115. Interacts with TMEM41B.

It localises to the cytoplasm. It is found in the golgi apparatus membrane. Its subcellular location is the cytoplasmic vesicle. The protein localises to the COPI-coated vesicle membrane. The protein resides in the cell membrane. It localises to the endoplasmic reticulum-Golgi intermediate compartment. The coatomer is a cytosolic protein complex that binds to dilysine motifs and reversibly associates with Golgi non-clathrin-coated vesicles, which further mediate biosynthetic protein transport from the ER, via the Golgi up to the trans Golgi network. Coatomer complex is required for budding from Golgi membranes, and is essential for the retrograde Golgi-to-ER transport of dilysine-tagged proteins. In mammals, the coatomer can only be recruited by membranes associated to ADP-ribosylation factors (ARFs), which are small GTP-binding proteins; the complex also influences the Golgi structural integrity, as well as the processing, activity, and endocytic recycling of LDL receptors. Plays a functional role in facilitating the transport of kappa-type opioid receptor mRNAs into axons and enhances translation of these proteins. Required for limiting lipid storage in lipid droplets. Involved in lipid homeostasis by regulating the presence of perilipin family members PLIN2 and PLIN3 at the lipid droplet surface and promoting the association of adipocyte surface triglyceride lipase (PNPLA2) with the lipid droplet to mediate lipolysis. Involved in the Golgi disassembly and reassembly processes during cell cycle. Involved in autophagy by playing a role in early endosome function. Plays a role in organellar compartmentalization of secretory compartments including endoplasmic reticulum (ER)-Golgi intermediate compartment (ERGIC), Golgi, trans-Golgi network (TGN) and recycling endosomes, and in biosynthetic transport of CAV1. Promotes degradation of Nef cellular targets CD4 and MHC class I antigens by facilitating their trafficking to degradative compartments. This is Coatomer subunit beta (COPB1) from Pongo abelii (Sumatran orangutan).